The following is a 164-amino-acid chain: MNPQREAAPKSYAIRDSRQMVWVLSGNSLIAAPLSRSIKPVTLHLIACRDTEFSDKEKGNMVYLGIKGKDLCLFCAEIQGKPTLQLKLQGSQDNIGKDTCWKLVGIHTCINLDVRESCFMGTLDQWGIGVGRKKWKSSFQHHHLRKKDKDFSSMRTNIGMPGRM.

Positions 1–4 are excised as a propeptide; sequence MNPQ.

It belongs to the IL-1 family. In terms of assembly, interacts with cargo receptor TMED10; the interaction mediates the translocation from the cytoplasm into the ERGIC (endoplasmic reticulum-Golgi intermediate compartment) and thereby secretion. N-terminal truncation leads to a dramatic enhancement of its activity (&gt;1000-fold). Expression at low levels in tonsil, bone marrow, heart, placenta, lung, testis and colon but not in any hematopoietic cell lines. Not detected in adipose tissue. Expressed at higher levels in psoriatic plaques than in symptomless psoriatic skin or healthy control skin. Increased levels are not detected in inflamed joint tissue.

It is found in the cytoplasm. The protein resides in the secreted. Functionally, cytokine that binds to and signals through the IL1RL2/IL-36R receptor which in turn activates NF-kappa-B and MAPK signaling pathways in target cells linked to a pro-inflammatory response. Part of the IL-36 signaling system that is thought to be present in epithelial barriers and to take part in local inflammatory response; similar to the IL-1 system with which it shares the coreceptor IL1RAP. Stimulates production of interleukin-6 and interleukin-8 in synovial fibrobasts, articular chondrocytes and mature adipocytes. Induces expression of a number of antimicrobial peptides including beta-defensins 4 and 103 as well as a number of matrix metalloproteases. Seems to be involved in skin inflammatory response by acting on keratinocytes, dendritic cells and indirectly on T-cells to drive tissue infiltration, cell maturation and cell proliferation. In cultured keratinocytes induces the expression of macrophage, T-cell, and neutrophil chemokines, such as CCL3, CCL4, CCL5, CCL2, CCL17, CCL22, CL20, CCL5, CCL2, CCL17, CCL22, CXCL8, CCL20 and CXCL1, and the production of pro-inflammatory cytokines such as TNF-alpha, IL-8 and IL-6. This is Interleukin-36 beta from Homo sapiens (Human).